The following is a 201-amino-acid chain: Small ribosomal subunit protein uS4 (201 aa).

The segment at 27-47 is disordered; it reads SKKNYPPGQHGNSRKRKTSEY. The 61-residue stretch at 92–152 folds into the S4 RNA-binding domain; that stretch reads GRLDNVVYRL…EKSKSMEVIA (61 aa).

It belongs to the universal ribosomal protein uS4 family. As to quaternary structure, part of the 30S ribosomal subunit. Contacts protein S5. The interaction surface between S4 and S5 is involved in control of translational fidelity.

Functionally, one of the primary rRNA binding proteins, it binds directly to 16S rRNA where it nucleates assembly of the body of the 30S subunit. Its function is as follows. With S5 and S12 plays an important role in translational accuracy. This Parabacteroides distasonis (strain ATCC 8503 / DSM 20701 / CIP 104284 / JCM 5825 / NCTC 11152) protein is Small ribosomal subunit protein uS4.